Consider the following 147-residue polypeptide: Myoglobin (147 aa).

One can recognise a Globin domain in the interval 2-137; sequence ADFEMVLKHW…VMTTIIADIE (136 aa). His60 lines the nitrite pocket. Residue His60 participates in O2 binding. Position 89 (His89) interacts with heme b.

Belongs to the globin family. In terms of assembly, monomeric.

It localises to the cytoplasm. It is found in the sarcoplasm. It catalyses the reaction Fe(III)-heme b-[protein] + nitric oxide + H2O = Fe(II)-heme b-[protein] + nitrite + 2 H(+). The catalysed reaction is H2O2 + AH2 = A + 2 H2O. In terms of biological role, monomeric heme protein which primary function is to store oxygen and facilitate its diffusion within muscle tissues. Reversibly binds oxygen through a pentacoordinated heme iron and enables its timely and efficient release as needed during periods of heightened demand. Depending on the oxidative conditions of tissues and cells, and in addition to its ability to bind oxygen, it also has a nitrite reductase activity whereby it regulates the production of bioactive nitric oxide. Under stress conditions, like hypoxia and anoxia, it also protects cells against reactive oxygen species thanks to its pseudoperoxidase activity. The protein is Myoglobin (mb) of Makaira nigricans (Atlantic blue marlin).